The sequence spans 740 residues: Melanoma-associated antigen D4 (740 aa).

A compositionally biased stretch (basic and acidic residues) spans 1 to 11 (MAEGSYRKESE). 4 disordered regions span residues 1-27 (MAEG…EVGE), 139-208 (ATHQ…GPST), 242-298 (PAGV…ALAK), and 321-377 (IPEP…ASQP). Residues 14–27 (NVEDMDEGSDEVGE) are compositionally biased toward acidic residues. 2 stretches are compositionally biased toward polar residues: residues 141–155 (HQAS…TSAA) and 162–175 (PETS…SRML). Over residues 185–207 (APARSPQPQTSSQAQEAAAEGPS) the composition is skewed to low complexity. Over residues 321–337 (IPEPESAAATSQQSAEP) the composition is skewed to low complexity. Residues 354–363 (DEYESGEEER) show a composition bias toward acidic residues. The 199-residue stretch at 414–612 (LQERANKLVK…REWRAHFLEA (199 aa)) folds into the MAGE domain. A disordered region spans residues 697-722 (WRAGVSSGTNGAASASMLDGPSTSST).

As to quaternary structure, interacts with TRIM27.

May enhance ubiquitin ligase activity of RING-type zinc finger-containing E3 ubiquitin-protein ligases. Proposed to act through recruitment and/or stabilization of the Ubl-conjugating enzyme (E2) at the E3:substrate complex. The polypeptide is Melanoma-associated antigen D4 (MAGED4) (Bos taurus (Bovine)).